We begin with the raw amino-acid sequence, 500 residues long: Proline--tRNA ligase (500 aa).

It belongs to the class-II aminoacyl-tRNA synthetase family. ProS type 3 subfamily. In terms of assembly, homodimer.

The protein resides in the cytoplasm. It catalyses the reaction tRNA(Pro) + L-proline + ATP = L-prolyl-tRNA(Pro) + AMP + diphosphate. In terms of biological role, catalyzes the attachment of proline to tRNA(Pro) in a two-step reaction: proline is first activated by ATP to form Pro-AMP and then transferred to the acceptor end of tRNA(Pro). The protein is Proline--tRNA ligase of Paramagnetospirillum magneticum (strain ATCC 700264 / AMB-1) (Magnetospirillum magneticum).